Here is a 498-residue protein sequence, read N- to C-terminus: MMVLQQQQQQRLWDATTTSNTNTQTQQSANVESTPTKVCHQENAATHTFMRHMSNSPTPPSPLRSLSDCGKSFEEEELELGENCEMPQNLSSKRQARELDSELENEVLDLAPPPKRLAEEQEEEKVASVNPPQPVAFAPEEMHQALQLQLHSYIEMVRQLAPEAFPNPNLATQFLLQNSLQALAQFQALQQMKQQQREDPLPSYSTPLAKSPLRSPSLSPVPRHSKSQQRTPPNSMTANSLGMSSAVMTPNTPSMQQQPQLQQSTPKPTSGLTVASAMAKLEQSPEETTDLEELEQFAKTFKQRRIKLGFTQGDVGLAMGKLYGNDFSQTTISRFEALNLSFKNMCKLKPLLQKWLEDADSTVAKSGGGVFNINTMTSTLSSTPESILGRRRKKRTSIETTVRTTLEKAFLMNCKPTSEEISQLSERLNMDKEVIRVWFCNRRQKEKRINPSLDLDSPTGTPLSSHAFGYPPQALNMSHMQMEGGSGSFCGSSISSGE.

Low complexity predominate over residues 1-30 (MMVLQQQQQQRLWDATTTSNTNTQTQQSAN). The tract at residues 1-35 (MMVLQQQQQQRLWDATTTSNTNTQTQQSANVESTP) is disordered. Phosphoserine is present on residues Ser-72, Ser-211, Ser-215, Ser-217, and Ser-219. The disordered stretch occupies residues 191–273 (QMKQQQREDP…STPKPTSGLT (83 aa)). Over residues 207–222 (PLAKSPLRSPSLSPVP) the composition is skewed to low complexity. Positions 228–251 (QQRTPPNSMTANSLGMSSAVMTPN) are enriched in polar residues. A compositionally biased stretch (low complexity) spans 252–270 (TPSMQQQPQLQQSTPKPTS). Positions 286–360 (EETTDLEELE…LLQKWLEDAD (75 aa)) constitute a POU-specific domain. A DNA-binding region (homeobox) is located at residues 391-450 (RRKKRTSIETTVRTTLEKAFLMNCKPTSEEISQLSERLNMDKEVIRVWFCNRRQKEKRIN).

It belongs to the POU transcription factor family. Class-2 subfamily. Initial expression in cellular blastoderm stage, then in ectodermal stripes during germband extension. Broad expression in the neuroectoderm followed by limitation to discrete subsets of CNS cells, and expression in specific PNS neurons and support cells.

Its subcellular location is the nucleus. Its function is as follows. DNA-binding regulatory protein implicated in early development. Involved in neuronal cell fate decision. May act as an octamer-dependent activator of transcription. Could also play an early role in specific ectodermal cells, and a subsequent role in the embryonic nervous system. The sequence is that of POU domain protein 2, isoform A (pdm2) from Drosophila melanogaster (Fruit fly).